Here is a 227-residue protein sequence, read N- to C-terminus: Transmembrane emp24 domain-containing protein 1 (227 aa).

A signal peptide spans 1–24; sequence MMAAGAAVALALWLLLPAVGVGEA. Residues 25-194 are Extracellular-facing; sequence GPPPIQDGEF…LQEDNLERVN (170 aa). One can recognise a GOLD domain in the interval 43–125; that stretch reads KQCFYQSAPA…EKLVFFELIF (83 aa). Residues 145–170 adopt a coiled-coil conformation; it reads EMLDVKMEDIKESIETMRTRLERSIQ. The helical transmembrane segment at 195 to 215 threads the bilayer; sequence FWSAANVAVLLLVAVLQVCTL. Residues 216–227 are Cytoplasmic-facing; the sequence is KRFFHDKRPVPT. Residues 218–219 carry the COPII vesicle coat-binding motif; the sequence is FF. Positions 218 to 227 match the COPI vesicle coat-binding motif; it reads FFHDKRPVPT.

This sequence belongs to the EMP24/GP25L family. In terms of assembly, homodimer in endoplasmic reticulum, endoplasmic reticulum-Golgi intermediate compartment and cis-Golgi network. Interacts with IL1RL1. Interacts with RNF26; this interaction is important to modulate innate immune signaling through the cGAS-STING pathway. Widely expressed.

It is found in the cell membrane. Its subcellular location is the endoplasmic reticulum membrane. The protein localises to the golgi apparatus. It localises to the cis-Golgi network membrane. The protein resides in the endoplasmic reticulum-Golgi intermediate compartment membrane. Functionally, potential role in vesicular protein trafficking, mainly in the early secretory pathway. May act as a cargo receptor at the lumenal side for incorporation of secretory cargo molecules into transport vesicles and may be involved in vesicle coat formation at the cytoplasmic side. Plays a positive role in IL-33-mediated IL-8 and IL-6 production by interacting with interleukin-33 receptor IL1RL1. Plays also a role in the modulation of innate immune signaling through the cGAS-STING pathway by interacting with RNF26. This Mus musculus (Mouse) protein is Transmembrane emp24 domain-containing protein 1 (Tmed1).